The following is a 43-amino-acid chain: Photosystem II reaction center protein Psb30 (43 aa).

Residues 15–35 (VIFQLTFVSLILISGPVVIFL) traverse the membrane as a helical segment.

The protein belongs to the Psb30/Ycf12 family. PSII is composed of 1 copy each of membrane proteins PsbA, PsbB, PsbC, PsbD, PsbE, PsbF, PsbH, PsbI, PsbJ, PsbK, PsbL, PsbM, PsbT, PsbX, PsbY, PsbZ, Psb30/Ycf12, peripheral proteins PsbO, CyanoQ (PsbQ), PsbU, PsbV and a large number of cofactors. It forms dimeric complexes.

The protein localises to the cellular thylakoid membrane. Its function is as follows. A core subunit of photosystem II (PSII), probably helps stabilize the reaction center. The polypeptide is Photosystem II reaction center protein Psb30 (Picosynechococcus sp. (strain ATCC 27264 / PCC 7002 / PR-6) (Agmenellum quadruplicatum)).